Consider the following 102-residue polypeptide: Colipase-like protein 2 (102 aa).

Positions M1–S23 are cleaved as a signal peptide. 5 cysteine pairs are disulfide-bonded: C36-C47, C42-C58, C46-C80, C68-C88, and C82-C99.

The protein belongs to the colipase family.

It localises to the secreted. The sequence is that of Colipase-like protein 2 (Clpsl2) from Mus musculus (Mouse).